The chain runs to 278 residues: MGSTSTPASSTNRLQDKVAIITGGAGGIGETTAKLFVRYGAKVVIADISDDHGQKVCNNIGSPDVISFVHCDVTKDEDVRNLVDTTIAKHGKLDIMFGNVGVLSTTPYSILEAGNEDFKRVMDINVYGAFLVAKHAARVMIPAKKGSIVFTASISSFTAGEGVSHVYTATKHAVLGLTTSLCTELGQHGIRVNCVSPYVVASPLLTDVFGVDSSRVEELAHQAANLKGILLRAEDVADAVAYLAGDESKYVSGLNLVIDGGYTRTNPAFPTALKHGLA.

Residues 23–28 (GGAGGI), D47, V73, and N99 each bind NAD(+). S104 and S164 together coordinate substrate. Residue Y167 is the Proton donor/acceptor of the active site. NAD(+)-binding residues include K171 and V200.

Belongs to the short-chain dehydrogenases/reductases (SDR) family. Homotetramer. As to expression, mostly expressed in stems and rhizomes, and, to a lower extent, in leaves.

The catalysed reaction is (-)-secoisolariciresinol + 2 NAD(+) = (-)-matairesinol + 2 NADH + 2 H(+). Its pathway is aromatic compound metabolism; phenylpropanoid biosynthesis. Functionally, oxidoreductase involved in lignan biosynthesis. Also involved in the biosynthesis of etoposide, a chemotherapeutic compound of the topoisomerase inhibitor family. Catalyzes the stereospecific conversion of (-)-secoisolariciresinol to (-)-matairesinol via a lactol intermediate. The sequence is that of Secoisolariciresinol dehydrogenase from Sinopodophyllum hexandrum (Himalayan may apple).